A 156-amino-acid chain; its full sequence is Small ribosomal subunit protein uS7 (156 aa).

This sequence belongs to the universal ribosomal protein uS7 family. In terms of assembly, part of the 30S ribosomal subunit. Contacts proteins S9 and S11.

Its function is as follows. One of the primary rRNA binding proteins, it binds directly to 16S rRNA where it nucleates assembly of the head domain of the 30S subunit. Is located at the subunit interface close to the decoding center, probably blocks exit of the E-site tRNA. The chain is Small ribosomal subunit protein uS7 from Carsonella ruddii (strain PV).